Here is a 126-residue protein sequence, read N- to C-terminus: Large ribosomal subunit protein bL12 (126 aa).

This sequence belongs to the bacterial ribosomal protein bL12 family. Homodimer. Part of the ribosomal stalk of the 50S ribosomal subunit. Forms a multimeric L10(L12)X complex, where L10 forms an elongated spine to which 2 to 4 L12 dimers bind in a sequential fashion. Binds GTP-bound translation factors.

In terms of biological role, forms part of the ribosomal stalk which helps the ribosome interact with GTP-bound translation factors. Is thus essential for accurate translation. The polypeptide is Large ribosomal subunit protein bL12 (Methylocella silvestris (strain DSM 15510 / CIP 108128 / LMG 27833 / NCIMB 13906 / BL2)).